A 728-amino-acid chain; its full sequence is Rho-related BTB domain-containing protein 2 (728 aa).

The interval 1-210 is rho-like; sequence MDSDMDYERP…DNAIRAALIS (210 aa). GTP-binding positions include 21–28, 84–88, and 140–143; these read GDNAVGKT, DTFGD, and CQLD. BTB domains lie at 266–333 and 500–567; these read ADVI…HHHH and SDVT…TSSP. Gly residues predominate over residues 304-313; sequence ELGGPSGSGG. A disordered region spans residues 304–333; sequence ELGGPSGSGGPRPEDHRSHPEQHHHHHHHH. Residues 315–324 show a composition bias toward basic and acidic residues; that stretch reads RPEDHRSHPE. The tract at residues 703 to 728 is disordered; that stretch reads FWNSPSSPSSSAAGSASPSSSSSAVV. Low complexity predominate over residues 706–728; the sequence is SPSSPSSSAAGSASPSSSSSAVV.

This sequence belongs to the small GTPase superfamily. Rho family. In terms of assembly, interacts with HSP90AA1 and HSP90AB1. Forms a complex with CUL3 and RBX1. Interacts (via BTB 1 domain) with CUL3. Interacts with MSI2. Post-translationally, autoubiquitinated by RHOBTB2-CUL3-RBX1 ubiquitin ligase complex. As to expression, expressed in most tissues, with highest expression in brain.

Regulator of cell proliferation and apoptosis. It likely functions as a substrate-adapter that recruits key substrates, e.g. MSI2, to CUL3-based ubiquitin ligase complexes for degradation. Required for MSI2 ubiquitination and degradation. In Mus musculus (Mouse), this protein is Rho-related BTB domain-containing protein 2 (Rhobtb2).